We begin with the raw amino-acid sequence, 142 residues long: Large ribosomal subunit protein bL17 (142 aa).

Belongs to the bacterial ribosomal protein bL17 family. Part of the 50S ribosomal subunit. Contacts protein L32.

The protein is Large ribosomal subunit protein bL17 of Wolbachia sp. subsp. Brugia malayi (strain TRS).